Reading from the N-terminus, the 798-residue chain is Penicillin-binding protein 1A (798 aa).

At 1-9 (MIKKIITTC) the chain is on the cytoplasmic side. The chain crosses the membrane as a helical; Signal-anchor for type II membrane protein span at residues 10 to 30 (MGLNNGLALFGVGLIAIAILV). Residues 31–798 (TYPKLPSLDS…NNRQQLDSLF (768 aa)) lie on the Periplasmic side of the membrane. The transglycosylase stretch occupies residues 50–218 (LTIYSSDGQV…SAYNPIVNPE (169 aa)). Catalysis depends on glutamate 88, which acts as the Proton donor; for transglycosylase activity. The transpeptidase stretch occupies residues 413–699 (TVVQEPLLQG…GTIAVPVWVE (287 aa)). The active-site Acyl-ester intermediate; for transpeptidase activity is serine 460. The segment at 734–798 (TSSDLALDNS…NNRQQLDSLF (65 aa)) is disordered. Residues 782–798 (LPSNTGNNNRQQLDSLF) show a composition bias toward polar residues.

It in the N-terminal section; belongs to the glycosyltransferase 51 family. The protein in the C-terminal section; belongs to the transpeptidase family.

The protein localises to the cell inner membrane. The enzyme catalyses [GlcNAc-(1-&gt;4)-Mur2Ac(oyl-L-Ala-gamma-D-Glu-L-Lys-D-Ala-D-Ala)](n)-di-trans,octa-cis-undecaprenyl diphosphate + beta-D-GlcNAc-(1-&gt;4)-Mur2Ac(oyl-L-Ala-gamma-D-Glu-L-Lys-D-Ala-D-Ala)-di-trans,octa-cis-undecaprenyl diphosphate = [GlcNAc-(1-&gt;4)-Mur2Ac(oyl-L-Ala-gamma-D-Glu-L-Lys-D-Ala-D-Ala)](n+1)-di-trans,octa-cis-undecaprenyl diphosphate + di-trans,octa-cis-undecaprenyl diphosphate + H(+). It carries out the reaction Preferential cleavage: (Ac)2-L-Lys-D-Ala-|-D-Ala. Also transpeptidation of peptidyl-alanyl moieties that are N-acyl substituents of D-alanine.. It functions in the pathway cell wall biogenesis; peptidoglycan biosynthesis. Cell wall formation. Synthesis of cross-linked peptidoglycan from the lipid intermediates. The enzyme has a penicillin-insensitive transglycosylase N-terminal domain (formation of linear glycan strands) and a penicillin-sensitive transpeptidase C-terminal domain (cross-linking of the peptide subunits). This chain is Penicillin-binding protein 1A (mrcA), found in Neisseria flavescens.